The primary structure comprises 309 residues: Elongation factor Ts, mitochondrial (309 aa).

Belongs to the EF-Ts family.

It is found in the mitochondrion. In terms of biological role, associates with the EF-Tu.GDP complex and induces the exchange of GDP to GTP. It remains bound to the aminoacyl-tRNA.EF-Tu.GTP complex up to the GTP hydrolysis stage on the ribosome. In Salmo salar (Atlantic salmon), this protein is Elongation factor Ts, mitochondrial (tsfm).